We begin with the raw amino-acid sequence, 349 residues long: Ureidoglycolate dehydrogenase (NAD(+)) (349 aa).

The active-site Proton acceptor is His-116. Residues Ser-140, 174-176, Lys-224, and 306-308 contribute to the NAD(+) site; these read DMA and GQD.

It belongs to the LDH2/MDH2 oxidoreductase family. Homodimer.

It localises to the cytoplasm. It catalyses the reaction (S)-ureidoglycolate + NAD(+) = N-carbamoyl-2-oxoglycine + NADH + H(+). It functions in the pathway nitrogen metabolism; (S)-allantoin degradation; oxalurate from (S)-ureidoglycolate: step 1/1. Functionally, allD plays a pivotal role as a metabolic branch-point enzyme in nitrogen utilization via the assimilation of allantoin. It is able to utilize allantoin as a sole source of nitrogen under anaerobic conditions. Catalyzes the oxidation of ureidoglycolate to oxalurate. The protein is Ureidoglycolate dehydrogenase (NAD(+)) of Escherichia coli O157:H7.